The sequence spans 465 residues: Mothers against decapentaplegic homolog 1 (465 aa).

Residues 12 to 136 (PAVKRLLGWK…YKRVESPVLP (125 aa)) enclose the MH1 domain. Positions 64, 109, 121, and 126 each coordinate Zn(2+). Residues 161–240 (QNEPHMPHNA…EDQMTHDTSQ (80 aa)) are disordered. The span at 179–210 (PNSHPFPHSPNSSYPNSPGSSSSTYPHSPASS) shows a compositional bias: low complexity. The MH2 domain occupies 271 to 465 (WCSIVYYELN…SPHNPISSVS (195 aa)). Phosphoserine occurs at positions 463 and 465.

The protein belongs to the dwarfin/SMAD family. In terms of assembly, found in a complex with SMAD4 and YY1. Interacts with HGS, NANOG and ZCCHC12. Upon C-terminus phosphorylation: forms trimers with another SMAD1 and the co-SMAD SMAD4. Interacts with PEBP2-alpha subunit, CREB-binding protein (CBP), p300, SMURF1, SMURF2, USP15 and HOXC8. Associates with ZNF423 or ZNF521 in response to BMP2 leading to activate transcription of BMP target genes. Interacts with SKOR1. Interacts (via MH2 domain) with LEMD3. Binding to LEMD3 results in at least a partial reduction of receptor-mediated phosphorylation. Forms a ternary complex with PSMB4 and OAZ1 before PSMB4 is incorporated into the 20S proteasome. Found in a macromolecular complex with FAM83G. Interacts (via MH2 domain) with FAM83G (via MH2 domain); in a SMAD4-independent manner. Interacts with ZC3H3. Interacts with TMEM119. Interacts (via MH1 and MH2 domains) with ZNF8. Interacts with RANBP3L; the interaction increases when SMAD1 is not phosphorylated and mediates SMAD1 nuclear export. Interacts with EGR1; this interaction inhibits SMAD1 dephosphorylation. Interacts with SMAD6. Interacts with YAP1. In terms of processing, phosphorylation of the C-terminal SVS motif by BMP type 1 receptor kinase activates SMAD1 by promoting dissociation from the receptor and trimerization with SMAD4. Phosphorylation by ERK2 MAP kinase in response to EGF or HGF prevents SMAD1 nuclear accumulation and transcriptional activity in response to BMP. Dephosphorylation, probably by PPM1A, induces its export from the nucleus to the cytoplasm. Dephosphorylation is inhibited by association with EGR1. Phosphorylation by CDK8/9 creates binding sites for YAP1, and subsequent phosphorylation by GSK3 switches off YAP1 binding and adds binding sites for SMURF1. Ubiquitinated by SMAD-specific E3 ubiquitin ligase SMURF1, leading to its degradation. Monoubiquitinated, leading to prevent DNA-binding. Deubiquitination by USP15 alleviates inhibition and promotes activation of TGF-beta target genes. Dephosphorylation, probably by PPM1A, induces its export from the nucleus to the cytoplasm. Phospho-SMAD1 is ubiquitinated by CHIP leading to disruption of the SMAD1-SMAD4 complex.

The protein localises to the cytoplasm. It is found in the nucleus. In terms of biological role, transcriptional modulator that plays a role in various cellular processes, including embryonic development, cell differentiation, and tissue homeostasis. Upon BMP ligand binding to their receptors at the cell surface, is phosphorylated by activated type I BMP receptors (BMPRIs) and associates with SMAD4 to form an heteromeric complex which translocates into the nucleus acting as transcription factor. In turn, the hetero-trimeric complex recognizes cis-regulatory elements containing Smad Binding Elements (SBEs) to modulate the outcome of the signaling network. SMAD1/OAZ1/PSMB4 complex mediates the degradation of the CREBBP/EP300 repressor SNIP1. This chain is Mothers against decapentaplegic homolog 1 (SMAD1), found in Coturnix japonica (Japanese quail).